The primary structure comprises 235 residues: MTELARLKFYATQPHSCSYLPEEQATTLFLDPSQPMDVHVYADLSEMGFRRSGDHLYRPHCQNCNACVPARIPAARFIPNRQQRRILKRNADLTVTAARPAFKEEYFELYRRYIETRHADGDMYPPSRDQFSTFLVRDLPFCWFYEFRLEGRLMAVAVCDLLPNGLSAVYTFYEPDEERRSLGRFAILWQITEALRQNLEAVYLGYWIKNCKKMNYKTQYRPIELLINQRWVTLN.

The protein belongs to the R-transferase family. Bpt subfamily.

It is found in the cytoplasm. It catalyses the reaction N-terminal L-glutamyl-[protein] + L-leucyl-tRNA(Leu) = N-terminal L-leucyl-L-glutamyl-[protein] + tRNA(Leu) + H(+). It carries out the reaction N-terminal L-aspartyl-[protein] + L-leucyl-tRNA(Leu) = N-terminal L-leucyl-L-aspartyl-[protein] + tRNA(Leu) + H(+). In terms of biological role, functions in the N-end rule pathway of protein degradation where it conjugates Leu from its aminoacyl-tRNA to the N-termini of proteins containing an N-terminal aspartate or glutamate. This chain is Aspartate/glutamate leucyltransferase, found in Pseudomonas putida (strain ATCC 47054 / DSM 6125 / CFBP 8728 / NCIMB 11950 / KT2440).